We begin with the raw amino-acid sequence, 347 residues long: Gas vesicle ATPase GvpN1 (347 aa).

The segment covering 1–11 (MTNESRKRKVR) has biased composition (basic residues). Residues 1–64 (MTNESRKRKV…EGFVPEEQSF (64 aa)) are disordered. The segment covering 18 to 55 (SRGDKKQGRSQSRDDKEIERLERQNDARGQESSTHVDE) has biased composition (basic and acidic residues). 91-98 (GPTGCGKT) lines the ATP pocket.

It belongs to the CbbQ/NirQ/NorQ/GpvN family. In terms of assembly, forms homodimers, forms a GvpN1-GvpO1 heterodimer, interacts with GvpC1 (via the latter's C-terminus) and GvpL, might interact with GvpA1.

The protein localises to the gas vesicle. The protein resides in the cytoplasm. It carries out the reaction ATP + H2O = ADP + phosphate + H(+). In terms of biological role, an ATPase that functions in gas vesicle formation. A minor component of the gas vesicle, also found in soluble extracts. Probably enhances gas vesicle formation. Gas vesicles are hollow, gas filled proteinaceous nanostructures found in several microbial planktonic microorganisms. They allow positioning of halobacteria at the optimal depth for growth in the poorly aerated, shallow brine pools of their habitat. Its function is as follows. Expression of a 9.5 kb p-vac DNA fragment containing 2 divergently transcribed regions (gvpD-gvpE-gvpF-gvpG-gvpH-gvpI-gvpJ-gvpK-gvpL-gvpM and gvpA-gvpC-gvpN-gvpO) allows H.volcanii to produce gas vesicles. A similar region restores gas vesicle production in H.halobium without the p-vac locus, but which still have the c-vac locus. The polypeptide is Gas vesicle ATPase GvpN1 (gvpN11) (Halobacterium salinarum (strain ATCC 700922 / JCM 11081 / NRC-1) (Halobacterium halobium)).